Here is a 194-residue protein sequence, read N- to C-terminus: Small ribosomal subunit protein uS4c (194 aa).

Residues 1–29 (RFKKIRRLGTLPGLTSKRPRSGSDLKNPL) are disordered. The S4 RNA-binding domain maps to 82 to 143 (MRLDNILFRL…KQRSKALIQN (62 aa)).

Belongs to the universal ribosomal protein uS4 family. In terms of assembly, part of the 30S ribosomal subunit. Contacts protein S5. The interaction surface between S4 and S5 is involved in control of translational fidelity.

It is found in the plastid. The protein localises to the chloroplast. In terms of biological role, one of the primary rRNA binding proteins, it binds directly to 16S rRNA where it nucleates assembly of the body of the 30S subunit. Functionally, with S5 and S12 plays an important role in translational accuracy. The polypeptide is Small ribosomal subunit protein uS4c (rps4) (Furcraea foetida (Mauritius hemp)).